A 118-amino-acid chain; its full sequence is REPTOR-binding partner (118 aa).

The span at 1–20 (MADMEIQSNKMSITEETQVQ) shows a compositional bias: polar residues. The segment at 1 to 53 (MADMEIQSNKMSITEETQVQTRKECGKRGRKPGRKTSTEKLDMKAKLERSRQS) is disordered. Residues 36–53 (TSTEKLDMKAKLERSRQS) are compositionally biased toward basic and acidic residues. Residues 40–77 (KLDMKAKLERSRQSARECRARKKLRYQYLEELVADREK) are basic motif. The bZIP domain occupies 40 to 90 (KLDMKAKLERSRQSARECRARKKLRYQYLEELVADREKAVVALRTELERLI). The segment at 82–89 (LRTELERL) is leucine-zipper.

This sequence belongs to the bZIP family. ATF subfamily. Homodimer. Interacts (via C-terminus) with REPTOR (via C-terminus).

The protein localises to the nucleus. It is found in the chromosome. Transcriptional regulator that acts in the TORC1 signaling pathway to regulate energy homeostasis and promote survival during nutrient deprivation. Interacts with REPTOR to form a transcriptional activator complex that functions downstream of TORC1 to up-regulate the expression of most target genes induced by TORC1 inhibition. In the complex, acts to enhance the binding of the transcriptional activator REPTOR to the regulatory sequences of target genes. Under normal conditions TORC1 is active, inhibiting the formation of the REPTOR/REPTOR-BP complex by phosphorylating REPTOR and mediates its cytoplasmic retention by forming a docking site for 14-3-3 proteins. Upon TORC1 inhibition resulting from nutrient stress, REPTOR is recruited into the nucleus where it interacts with REPTOR-BP and together they maintain organismal metabolism by activating the expression of target stress response genes including those involved in glycogenesis and triglyceride biosynthesis. The complex also appears to negatively regulate some aspects of TORC1-dependent larval growth. The chain is REPTOR-binding partner from Drosophila melanogaster (Fruit fly).